We begin with the raw amino-acid sequence, 384 residues long: S-adenosylmethionine synthase (384 aa).

Residue His-16 participates in ATP binding. Residue Asp-18 coordinates Mg(2+). Glu-44 contributes to the K(+) binding site. 2 residues coordinate L-methionine: Glu-57 and Gln-100. The tract at residues 100 to 110 is flexible loop; it reads QSADIAMGVDE. Residues 165 to 167, Asp-240, 246 to 247, Ala-263, and Lys-267 each bind ATP; these read DAK and RK. Asp-240 lines the L-methionine pocket. Lys-271 provides a ligand contact to L-methionine.

The protein belongs to the AdoMet synthase family. As to quaternary structure, homotetramer; dimer of dimers. The cofactor is Mg(2+). Requires K(+) as cofactor.

Its subcellular location is the cytoplasm. The catalysed reaction is L-methionine + ATP + H2O = S-adenosyl-L-methionine + phosphate + diphosphate. Its pathway is amino-acid biosynthesis; S-adenosyl-L-methionine biosynthesis; S-adenosyl-L-methionine from L-methionine: step 1/1. Its function is as follows. Catalyzes the formation of S-adenosylmethionine (AdoMet) from methionine and ATP. The overall synthetic reaction is composed of two sequential steps, AdoMet formation and the subsequent tripolyphosphate hydrolysis which occurs prior to release of AdoMet from the enzyme. This chain is S-adenosylmethionine synthase, found in Cellvibrio japonicus (strain Ueda107) (Pseudomonas fluorescens subsp. cellulosa).